The chain runs to 372 residues: Queuine tRNA-ribosyltransferase (372 aa).

The active-site Proton acceptor is the aspartate 92. Residues aspartate 92–tyrosine 96, aspartate 146, glutamine 188, and glycine 215 contribute to the substrate site. The interval glycine 246–glutamate 252 is RNA binding. Catalysis depends on aspartate 265, which acts as the Nucleophile. The tract at residues threonine 270–arginine 274 is RNA binding; important for wobble base 34 recognition. The Zn(2+) site is built by cysteine 303, cysteine 305, cysteine 308, and histidine 334.

This sequence belongs to the queuine tRNA-ribosyltransferase family. As to quaternary structure, homodimer. Within each dimer, one monomer is responsible for RNA recognition and catalysis, while the other monomer binds to the replacement base PreQ1. Requires Zn(2+) as cofactor.

It carries out the reaction 7-aminomethyl-7-carbaguanine + guanosine(34) in tRNA = 7-aminomethyl-7-carbaguanosine(34) in tRNA + guanine. It functions in the pathway tRNA modification; tRNA-queuosine biosynthesis. Catalyzes the base-exchange of a guanine (G) residue with the queuine precursor 7-aminomethyl-7-deazaguanine (PreQ1) at position 34 (anticodon wobble position) in tRNAs with GU(N) anticodons (tRNA-Asp, -Asn, -His and -Tyr). Catalysis occurs through a double-displacement mechanism. The nucleophile active site attacks the C1' of nucleotide 34 to detach the guanine base from the RNA, forming a covalent enzyme-RNA intermediate. The proton acceptor active site deprotonates the incoming PreQ1, allowing a nucleophilic attack on the C1' of the ribose to form the product. After dissociation, two additional enzymatic reactions on the tRNA convert PreQ1 to queuine (Q), resulting in the hypermodified nucleoside queuosine (7-(((4,5-cis-dihydroxy-2-cyclopenten-1-yl)amino)methyl)-7-deazaguanosine). This is Queuine tRNA-ribosyltransferase from Prochlorococcus marinus (strain MIT 9215).